The primary structure comprises 113 residues: U11-theraphotoxin-Hhn1a (113 aa).

Positions 1–21 (MNTVRVTFLLVFVLAVSLGQA) are cleaved as a signal peptide. Positions 22–74 (DKDENRMEMQEKTEQGNSYLDFAENLLLQKLEELEAKLLEEDSEESRNSRQKR) are excised as a propeptide. Residues 60 to 69 (LEEDSEESRN) show a composition bias toward basic and acidic residues. Residues 60–83 (LEEDSEESRNSRQKRCIGEGVPCD) form a disordered region. 3 disulfides stabilise this stretch: Cys75-Cys90, Cys82-Cys95, and Cys89-Cys110.

It belongs to the neurotoxin 14 (magi-1) family. 01 (HNTX-16) subfamily. As to expression, expressed by the venom gland.

It localises to the secreted. Functionally, probable ion channel inhibitor. The protein is U11-theraphotoxin-Hhn1a of Cyriopagopus hainanus (Chinese bird spider).